The following is an 86-amino-acid chain: Large ribosomal subunit protein bL31 (86 aa).

Residues 64-86 form a disordered region; that stretch reads KYGMGSANSSESKDQKEEKDSKK. Over residues 74 to 86 the composition is skewed to basic and acidic residues; that stretch reads ESKDQKEEKDSKK.

The protein belongs to the bacterial ribosomal protein bL31 family. Type A subfamily. As to quaternary structure, part of the 50S ribosomal subunit.

Binds the 23S rRNA. This is Large ribosomal subunit protein bL31 from Prochlorococcus marinus (strain MIT 9301).